Here is a 393-residue protein sequence, read N- to C-terminus: NAD(P)H-quinone oxidoreductase subunit H, chloroplastic (393 aa).

Belongs to the complex I 49 kDa subunit family. In terms of assembly, NDH is composed of at least 16 different subunits, 5 of which are encoded in the nucleus.

Its subcellular location is the plastid. The protein resides in the chloroplast thylakoid membrane. It carries out the reaction a plastoquinone + NADH + (n+1) H(+)(in) = a plastoquinol + NAD(+) + n H(+)(out). The catalysed reaction is a plastoquinone + NADPH + (n+1) H(+)(in) = a plastoquinol + NADP(+) + n H(+)(out). Functionally, NDH shuttles electrons from NAD(P)H:plastoquinone, via FMN and iron-sulfur (Fe-S) centers, to quinones in the photosynthetic chain and possibly in a chloroplast respiratory chain. The immediate electron acceptor for the enzyme in this species is believed to be plastoquinone. Couples the redox reaction to proton translocation, and thus conserves the redox energy in a proton gradient. This chain is NAD(P)H-quinone oxidoreductase subunit H, chloroplastic, found in Nandina domestica (Heavenly bamboo).